The following is an 833-amino-acid chain: Bifunctional dethiobiotin synthetase/7,8-diamino-pelargonic acid aminotransferase, mitochondrial (833 aa).

The N-terminal 23 residues, 1 to 23 (MIPVTATLIRHRLRHLRHRIRFK), are a transit peptide targeting the mitochondrion. The tract at residues 36–299 (HPTYLIWSAN…VLVLPPVPKD (264 aa)) is dethiobiotin synthetase. 47–52 (SLGKTL) contacts ATP. Thr-51 contributes to the Mg(2+) binding site. Thr-81 lines the substrate pocket. Asp-88 is a binding site for Mg(2+). ATP is bound by residues Asp-97, 210 to 213 (ETAG), and 270 to 271 (ED). Residue Glu-210 participates in Mg(2+) binding. The 7,8-diamino-pelargonic acid aminotransferase stretch occupies residues 332 to 830 (RLNGMAKLAG…TKLYKRLGEF (499 aa)). 391 to 392 (WW) lines the (8S)-8-amino-7-oxononanoate pocket. 453–454 (GS) is a binding site for pyridoxal 5'-phosphate. Position 495 (Tyr-495) interacts with (8S)-8-amino-7-oxononanoate. ATP-binding positions include 518–520 (PWY) and Glu-545. Asp-637 is a pyridoxal 5'-phosphate binding site. (8S)-8-amino-7-oxononanoate is bound by residues Lys-666 and Gly-700. Position 666 is an N6-(pyridoxal phosphate)lysine (Lys-666). Residue 701-702 (HS) coordinates pyridoxal 5'-phosphate. Arg-797 is a binding site for (8S)-8-amino-7-oxononanoate.

It in the N-terminal section; belongs to the dethiobiotin synthetase family. In the C-terminal section; belongs to the class-III pyridoxal-phosphate-dependent aminotransferase family. BioA subfamily. As to quaternary structure, homodimer. The cofactor is Mg(2+). Pyridoxal 5'-phosphate serves as cofactor.

The protein resides in the mitochondrion matrix. The catalysed reaction is (7R,8S)-7,8-diammoniononanoate + CO2 + ATP = (4R,5S)-dethiobiotin + ADP + phosphate + 3 H(+). It catalyses the reaction (8S)-8-amino-7-oxononanoate + S-adenosyl-L-methionine = S-adenosyl-4-methylsulfanyl-2-oxobutanoate + (7R,8S)-7,8-diammoniononanoate. It participates in cofactor biosynthesis; biotin biosynthesis; biotin from 7,8-diaminononanoate: step 1/2. The protein operates within cofactor biosynthesis; biotin biosynthesis; 7,8-diaminononanoate from 8-amino-7-oxononanoate (SAM route): step 1/1. In terms of biological role, bifunctional enzyme that catalyzes two different reactions involved in the biotin biosynthesis. Catalyzes a mechanistically unusual reaction, the ATP-dependent insertion of CO2 between the N7 and N8 nitrogen atoms of 7,8-diaminopelargonic acid (DAPA) to form an ureido ring. Its function is as follows. Catalyzes the transfer of the alpha-amino group from S-adenosyl-L-methionine (SAM) to 7-keto-8-aminopelargonic acid (KAPA) to form 7,8-diaminopelargonic acid (DAPA). It is the only aminotransferase known to utilize SAM as an amino donor. The polypeptide is Bifunctional dethiobiotin synthetase/7,8-diamino-pelargonic acid aminotransferase, mitochondrial (Arabidopsis thaliana (Mouse-ear cress)).